Consider the following 1289-residue polypeptide: Pesticidal crystal protein Cry5Ab (1289 aa).

A disordered region spans residues 1263 to 1289 (PLPTDDQNSEGNTASSTNSDTSMNNNQ). Positions 1274-1289 (NTASSTNSDTSMNNNQ) are enriched in low complexity.

It belongs to the delta endotoxin family.

Functionally, endotoxin with nematicidal activity. The chain is Pesticidal crystal protein Cry5Ab (cry5Ab) from Bacillus thuringiensis subsp. darmstadiensis.